Reading from the N-terminus, the 474-residue chain is 6-phospho-beta-galactosidase (474 aa).

D-galactose 6-phosphate-binding residues include Gln-19, His-116, Asn-159, Glu-160, and Asn-297. The active-site Proton donor is the Glu-160. The active-site Nucleophile is the Glu-375. Residues Ser-433, Trp-434, Lys-440, and Tyr-442 each contribute to the D-galactose 6-phosphate site.

The protein belongs to the glycosyl hydrolase 1 family.

The enzyme catalyses a 6-phospho-beta-D-galactoside + H2O = D-galactose 6-phosphate + an alcohol. The protein operates within carbohydrate metabolism; lactose degradation; D-galactose 6-phosphate and beta-D-glucose from lactose 6-phosphate: step 1/1. The sequence is that of 6-phospho-beta-galactosidase from Lacticaseibacillus rhamnosus (Lactobacillus rhamnosus).